The following is a 101-amino-acid chain: Parathymosin (101 aa).

The segment at 1-101 (MSEKSVEAAA…RQKTENGASA (101 aa)) is disordered. The residue at position 2 (Ser2) is an N-acetylserine. Phosphoserine is present on Ser2. N6-acetyllysine is present on Lys4. 2 positions are modified to phosphoserine: Ser5 and Ser13. Residues 13-37 (SAKDLKEKKDKVEEKAGRKERKKEV) are compositionally biased toward basic and acidic residues. Lys15 is subject to N6-acetyllysine. Residues 38–74 (VEEEENGAEEEEEETAEDGEDDDEGDEEDEEEEEEDE) show a composition bias toward acidic residues. Thr52 bears the Phosphothreonine mark. Lys91 is subject to N6-acetyllysine.

This sequence belongs to the pro/parathymosin family.

In terms of biological role, parathymosin may mediate immune function by blocking the effect of prothymosin alpha which confers resistance to certain opportunistic infections. This chain is Parathymosin (Ptms), found in Mus musculus (Mouse).